The sequence spans 368 residues: tRNA(Met) cytidine acetate ligase (368 aa).

ATP is bound by residues 7 to 20 (IAEF…HKYL), glycine 96, asparagine 152, and arginine 175.

This sequence belongs to the TmcAL family.

The protein localises to the cytoplasm. The enzyme catalyses cytidine(34) in elongator tRNA(Met) + acetate + ATP = N(4)-acetylcytidine(34) in elongator tRNA(Met) + AMP + diphosphate. Its function is as follows. Catalyzes the formation of N(4)-acetylcytidine (ac(4)C) at the wobble position of elongator tRNA(Met), using acetate and ATP as substrates. First activates an acetate ion to form acetyladenylate (Ac-AMP) and then transfers the acetyl group to tRNA to form ac(4)C34. The polypeptide is tRNA(Met) cytidine acetate ligase (Streptococcus pyogenes serotype M5 (strain Manfredo)).